The chain runs to 596 residues: A-type ATP synthase subunit A (596 aa).

ATP is bound at residue G241–T248.

The protein belongs to the ATPase alpha/beta chains family. As to quaternary structure, has multiple subunits with at least A(3), B(3), C, D, E, F, H, I and proteolipid K(x).

It is found in the cell membrane. It carries out the reaction ATP + H2O + 4 H(+)(in) = ADP + phosphate + 5 H(+)(out). In terms of biological role, component of the A-type ATP synthase that produces ATP from ADP in the presence of a proton gradient across the membrane. The A chain is the catalytic subunit. This is A-type ATP synthase subunit A from Ignicoccus hospitalis (strain KIN4/I / DSM 18386 / JCM 14125).